The following is a 211-amino-acid chain: Thiamine-phosphate synthase (211 aa).

4-amino-2-methyl-5-(diphosphooxymethyl)pyrimidine is bound by residues 37 to 41 (QLREK) and N69. Mg(2+) contacts are provided by D70 and E89. S108 serves as a coordination point for 4-amino-2-methyl-5-(diphosphooxymethyl)pyrimidine. 134–136 (TTT) lines the 2-[(2R,5Z)-2-carboxy-4-methylthiazol-5(2H)-ylidene]ethyl phosphate pocket. K137 is a binding site for 4-amino-2-methyl-5-(diphosphooxymethyl)pyrimidine. 2-[(2R,5Z)-2-carboxy-4-methylthiazol-5(2H)-ylidene]ethyl phosphate is bound by residues G163 and 183 to 184 (VS).

The protein belongs to the thiamine-phosphate synthase family. Mg(2+) serves as cofactor.

The enzyme catalyses 2-[(2R,5Z)-2-carboxy-4-methylthiazol-5(2H)-ylidene]ethyl phosphate + 4-amino-2-methyl-5-(diphosphooxymethyl)pyrimidine + 2 H(+) = thiamine phosphate + CO2 + diphosphate. The catalysed reaction is 2-(2-carboxy-4-methylthiazol-5-yl)ethyl phosphate + 4-amino-2-methyl-5-(diphosphooxymethyl)pyrimidine + 2 H(+) = thiamine phosphate + CO2 + diphosphate. It carries out the reaction 4-methyl-5-(2-phosphooxyethyl)-thiazole + 4-amino-2-methyl-5-(diphosphooxymethyl)pyrimidine + H(+) = thiamine phosphate + diphosphate. It participates in cofactor biosynthesis; thiamine diphosphate biosynthesis; thiamine phosphate from 4-amino-2-methyl-5-diphosphomethylpyrimidine and 4-methyl-5-(2-phosphoethyl)-thiazole: step 1/1. In terms of biological role, condenses 4-methyl-5-(beta-hydroxyethyl)thiazole monophosphate (THZ-P) and 2-methyl-4-amino-5-hydroxymethyl pyrimidine pyrophosphate (HMP-PP) to form thiamine monophosphate (TMP). This Enterococcus faecalis (strain ATCC 700802 / V583) protein is Thiamine-phosphate synthase.